The chain runs to 305 residues: Peroxisome assembly protein 26 (305 aa).

The Cytoplasmic portion of the chain corresponds to 1–246 (MKSDASTSAA…RRLWGSVVSH (246 aa)). Residues 247–267 (LLSQPFRKGLLAALILCLLIL) form a helical; Signal-anchor for type II membrane protein membrane-spanning segment. The Peroxisomal matrix segment spans residues 268 to 305 (RFDPAAPSSLPFLYQLTQLFRRIQKATLSRLYPLALRD).

It belongs to the peroxin-26 family. As to quaternary structure, interacts (via its cytoplasmic domain) with PEX6; interaction is direct and is ATP-dependent. Interacts with PEX1; interaction is indirect and is mediated via interaction with PEX6.

It is found in the peroxisome membrane. In terms of biological role, peroxisomal docking factor that anchors PEX1 and PEX6 to peroxisome membranes. PEX26 is therefore required for the formation of the PEX1-PEX6 AAA ATPase complex, a complex that mediates the extraction of the PEX5 receptor from peroxisomal membrane. The polypeptide is Peroxisome assembly protein 26 (Mus musculus (Mouse)).